A 586-amino-acid chain; its full sequence is UvrABC system protein C (586 aa).

The GIY-YIG domain maps to 17-94 (HKPGCYLWKD…IKQYKPRFNL (78 aa)). The UVR domain occupies 201-236 (EQVLNHLQQQEIKASEQQNFEAARHFLDLQKAVLEL).

This sequence belongs to the UvrC family. Interacts with UvrB in an incision complex.

It is found in the cytoplasm. Its function is as follows. The UvrABC repair system catalyzes the recognition and processing of DNA lesions. UvrC both incises the 5' and 3' sides of the lesion. The N-terminal half is responsible for the 3' incision and the C-terminal half is responsible for the 5' incision. The protein is UvrABC system protein C of Mycoplasma pneumoniae (strain ATCC 29342 / M129 / Subtype 1) (Mycoplasmoides pneumoniae).